The primary structure comprises 146 residues: MQFNISDIIKILPHSYPFLLVDRVIECDPSKSIKAIKNVTFNEPFFIGHFPNHPIMPGVLIVESLAQASAICILGKGSKSTMENKVVYLMSIENAKFRKPVTPGDTLILQADFKNARLSVCKFECFAYVGEEKVAEATILAMLQNI.

The active site involves H49.

It belongs to the thioester dehydratase family. FabZ subfamily.

It localises to the cytoplasm. The catalysed reaction is a (3R)-hydroxyacyl-[ACP] = a (2E)-enoyl-[ACP] + H2O. Its function is as follows. Involved in unsaturated fatty acids biosynthesis. Catalyzes the dehydration of short chain beta-hydroxyacyl-ACPs and long chain saturated and unsaturated beta-hydroxyacyl-ACPs. In Wolbachia sp. subsp. Brugia malayi (strain TRS), this protein is 3-hydroxyacyl-[acyl-carrier-protein] dehydratase FabZ.